The following is a 427-amino-acid chain: Serine--tRNA ligase (427 aa).

231 to 233 (TAE) lines the L-serine pocket. ATP is bound at residue 262-264 (RSE). Residue Glu-285 coordinates L-serine. 349–352 (EISS) contacts ATP. L-serine is bound at residue Ser-385.

It belongs to the class-II aminoacyl-tRNA synthetase family. Type-1 seryl-tRNA synthetase subfamily. As to quaternary structure, homodimer. The tRNA molecule binds across the dimer.

The protein localises to the cytoplasm. It catalyses the reaction tRNA(Ser) + L-serine + ATP = L-seryl-tRNA(Ser) + AMP + diphosphate + H(+). The catalysed reaction is tRNA(Sec) + L-serine + ATP = L-seryl-tRNA(Sec) + AMP + diphosphate + H(+). Its pathway is aminoacyl-tRNA biosynthesis; selenocysteinyl-tRNA(Sec) biosynthesis; L-seryl-tRNA(Sec) from L-serine and tRNA(Sec): step 1/1. Catalyzes the attachment of serine to tRNA(Ser). Is also able to aminoacylate tRNA(Sec) with serine, to form the misacylated tRNA L-seryl-tRNA(Sec), which will be further converted into selenocysteinyl-tRNA(Sec). The polypeptide is Serine--tRNA ligase (Allorhizobium ampelinum (strain ATCC BAA-846 / DSM 112012 / S4) (Agrobacterium vitis (strain S4))).